The primary structure comprises 225 residues: Vacuolar protein sorting-associated protein 2 homolog 1 (225 aa).

Residues 13-54 adopt a coiled-coil conformation; that stretch reads AELLRENKRMLDKSIREIERERQGLQTQEKKLINEIKKTAKQ.

It belongs to the SNF7 family. Component of the endosomal sorting required for transport complex III (ESCRT-III), composed at least of VPS2, VPS20, VPS24 and VPS32. Interacts with SKD1.

The protein localises to the endosome. Functionally, component of the ESCRT-III complex, which is required for multivesicular bodies (MVBs) formation and sorting of endosomal cargo proteins into MVBs. The ESCRT-III complex is probably involved in the concentration of MVB cargo. This chain is Vacuolar protein sorting-associated protein 2 homolog 1 (VPS2.1), found in Arabidopsis thaliana (Mouse-ear cress).